The following is a 429-amino-acid chain: Glutamate-1-semialdehyde 2,1-aminomutase (429 aa).

Residue lysine 265 is modified to N6-(pyridoxal phosphate)lysine.

It belongs to the class-III pyridoxal-phosphate-dependent aminotransferase family. HemL subfamily. In terms of assembly, homodimer. The cofactor is pyridoxal 5'-phosphate.

It is found in the cytoplasm. It carries out the reaction (S)-4-amino-5-oxopentanoate = 5-aminolevulinate. The protein operates within porphyrin-containing compound metabolism; protoporphyrin-IX biosynthesis; 5-aminolevulinate from L-glutamyl-tRNA(Glu): step 2/2. The chain is Glutamate-1-semialdehyde 2,1-aminomutase from Alkalilimnicola ehrlichii (strain ATCC BAA-1101 / DSM 17681 / MLHE-1).